Here is a 403-residue protein sequence, read N- to C-terminus: ATP phosphoribosyltransferase regulatory subunit (403 aa).

The protein belongs to the class-II aminoacyl-tRNA synthetase family. HisZ subfamily. Heteromultimer composed of HisG and HisZ subunits.

It localises to the cytoplasm. It participates in amino-acid biosynthesis; L-histidine biosynthesis; L-histidine from 5-phospho-alpha-D-ribose 1-diphosphate: step 1/9. Functionally, required for the first step of histidine biosynthesis. May allow the feedback regulation of ATP phosphoribosyltransferase activity by histidine. In Crocosphaera subtropica (strain ATCC 51142 / BH68) (Cyanothece sp. (strain ATCC 51142)), this protein is ATP phosphoribosyltransferase regulatory subunit.